A 326-amino-acid polypeptide reads, in one-letter code: Metal-binding protein YtgA (326 aa).

The first 21 residues, 1 to 21, serve as a signal peptide directing secretion; sequence MSFFHTRKYKLILRGLLCLAG. Positions 75, 141, 207, and 299 each coordinate Fe(2+).

The protein belongs to the bacterial solute-binding protein 9 family. Monomer.

The protein resides in the periplasm. Part of the ATP-binding cassette (ABC) transport system YtgABCD involved in metal import. Binds Fe(2+), Mn(2+) and Ni(2+), with a preference for Fe(2+) and delivers them to the membrane permease for translocation into the cytoplasm. This is Metal-binding protein YtgA from Chlamydia trachomatis serovar D (strain ATCC VR-885 / DSM 19411 / UW-3/Cx).